A 134-amino-acid chain; its full sequence is Large ribosomal subunit protein eL28 (134 aa).

Residue Ser60 is modified to Phosphoserine.

This sequence belongs to the eukaryotic ribosomal protein eL28 family. Component of the large ribosomal subunit (LSU). Mature yeast ribosomes consist of a small (40S) and a large (60S) subunit. The 40S small subunit contains 1 molecule of ribosomal RNA (18S rRNA) and at least 33 different proteins. The large 60S subunit contains 3 rRNA molecules (25S, 5.8S and 5S rRNA) and at least 46 different proteins.

It is found in the cytoplasm. Functionally, component of the ribosome, a large ribonucleoprotein complex responsible for the synthesis of proteins in the cell. The small ribosomal subunit (SSU) binds messenger RNAs (mRNAs) and translates the encoded message by selecting cognate aminoacyl-transfer RNA (tRNA) molecules. The large subunit (LSU) contains the ribosomal catalytic site termed the peptidyl transferase center (PTC), which catalyzes the formation of peptide bonds, thereby polymerizing the amino acids delivered by tRNAs into a polypeptide chain. The nascent polypeptides leave the ribosome through a tunnel in the LSU and interact with protein factors that function in enzymatic processing, targeting, and the membrane insertion of nascent chains at the exit of the ribosomal tunnel. This chain is Large ribosomal subunit protein eL28 (rpl44), found in Schizosaccharomyces pombe (strain 972 / ATCC 24843) (Fission yeast).